A 223-amino-acid chain; its full sequence is UPF0441 protein KPK_0672 (223 aa).

Positions 165–223 are disordered; that stretch reads SYGAAQPGRTMNVPKTAMAPKPATTTTVTRGGFGESVAKQSTMQRSAAGSTSSSRSMGG. Composition is skewed to low complexity over residues 177-193 and 209-223; these read VPKT…TTVT and RSAA…SMGG.

The protein belongs to the UPF0441 family.

The polypeptide is UPF0441 protein KPK_0672 (Klebsiella pneumoniae (strain 342)).